A 351-amino-acid chain; its full sequence is Cyanuric acid amidohydrolase (351 aa).

Residues 1 to 96 are RU A; that stretch reads MPSLRAHVFR…HWTVFARETV (96 aa). Residues Arg53 and 77 to 78 each bind substrate; that span reads SG. The RU B stretch occupies residues 103-240; the sequence is ALAIGVSRTP…HEIIVLGMSA (138 aa). Residue Lys153 is part of the active site. Substrate is bound by residues Arg185 and 223–224; that span reads SS. The Nucleophile role is filled by Ser223. The tract at residues 246 to 351 is RU C; it reads LSIDHAVMRD…PVAIIVEKEQ (106 aa). Glu283 lines the Mg(2+) pocket. Substrate is bound by residues Arg310 and 329–330; that span reads SG. 5 residues coordinate Mg(2+): Ala332, Gln335, Gly336, Pro337, and Gly340.

It belongs to the cyclic amide hydrolase (CyAH) family. Homotetramer.

The enzyme catalyses cyanurate + H2O = 1-carboxybiuret + H(+). It participates in xenobiotic degradation; atrazine degradation; biuret from cyanurate: step 1/1. Its activity is regulated as follows. Inhibited by barbituric acid. Responsible for the hydrolysis of cyanuric acid, an intermediate formed during catabolism of s-triazine based compounds in herbicides such as atrazine and polymers such as melamine. Catalyzes the hydrolytic opening of the s-triazine ring of cyanuric acid (2,4,6-trihydroxy-s-triazine) to yield carbon dioxide and carboxybiuret, which spontaneously decarboxylates to biuret. The sequence is that of Cyanuric acid amidohydrolase from Rhizobium johnstonii (strain DSM 114642 / LMG 32736 / 3841) (Rhizobium leguminosarum bv. viciae).